The chain runs to 135 residues: Putative pre-16S rRNA nuclease (135 aa).

It belongs to the YqgF nuclease family.

It is found in the cytoplasm. Functionally, could be a nuclease involved in processing of the 5'-end of pre-16S rRNA. The sequence is that of Putative pre-16S rRNA nuclease from Thermus thermophilus (strain ATCC 27634 / DSM 579 / HB8).